A 345-amino-acid polypeptide reads, in one-letter code: Guanine nucleotide-binding protein G(i) subunit alpha-3 (345 aa).

In terms of domain architecture, G-alpha spans 23–345; sequence KEVKLLLLGA…KSNLMECGLY (323 aa). The interval 26–39 is G1 motif; the sequence is KLLLLGAGESGKST. Positions 33, 34, 35, 36, 37, 38, 39, 141, 142, 166, 167, 168, 169, 170, 171, 172, 192, 194, 260, 261, 263, 264, 316, 317, and 318 each coordinate GTP. Ser38 is a Mg(2+) binding site. The interval 164–172 is G2 motif; sequence DVLRTRVKT. Thr172 serves as a coordination point for Mg(2+). The tract at residues 187 to 196 is G3 motif; it reads FKMFDVGGQR. Residues 256-263 form a G4 motif region; sequence ILFLNKKD. The segment at 315 to 320 is G5 motif; it reads TCATDT.

This sequence belongs to the G-alpha family. G(i/o/t/z) subfamily. As to quaternary structure, heterotrimeric G proteins are composed of 3 units; alpha, beta and gamma. The alpha subunit contains the guanine nucleotide binding site. GTP binding causes dissociation of the heterotrimer, liberating the individual subunits so that they can interact with downstream effector proteins.

The protein localises to the cytoplasm. The protein resides in the cell membrane. Its subcellular location is the cytoskeleton. It is found in the microtubule organizing center. It localises to the centrosome. The protein localises to the membrane. Its function is as follows. Heterotrimeric guanine nucleotide-binding proteins (G proteins) function as transducers downstream of G protein-coupled receptors (GPCRs) in numerous signaling cascades. The alpha chain contains the guanine nucleotide binding site and alternates between an active, GTP-bound state and an inactive, GDP-bound state. Signaling by an activated GPCR promotes GDP release and GTP binding. The alpha subunit has a low GTPase activity that converts bound GTP to GDP, thereby terminating the signal. Both GDP release and GTP hydrolysis are modulated by numerous regulatory proteins. Signaling is mediated via effector proteins, such as adenylate cyclase. Inhibits adenylate cyclase activity, leading to decreased intracellular cAMP levels. Stimulates the activity of receptor-regulated K(+) channels. The active GTP-bound form prevents the association of RGS14 with centrosomes and is required for the translocation of RGS14 from the cytoplasm to the plasma membrane. May play a role in cell division. The active GTP-bound form activates the calcium permeant TRPC5 ion channels. The chain is Guanine nucleotide-binding protein G(i) subunit alpha-3 (gnai3) from Xenopus laevis (African clawed frog).